Consider the following 600-residue polypeptide: UvrABC system protein C (600 aa).

A GIY-YIG domain is found at 15–92; the sequence is EKPGCYLMKD…IKKYQPYYNV (78 aa). One can recognise a UVR domain in the interval 197–232; sequence TSVKQDLTTKMEKASENLEFERAAEIRDQLKYIEET.

The protein belongs to the UvrC family. In terms of assembly, interacts with UvrB in an incision complex.

It is found in the cytoplasm. The UvrABC repair system catalyzes the recognition and processing of DNA lesions. UvrC both incises the 5' and 3' sides of the lesion. The N-terminal half is responsible for the 3' incision and the C-terminal half is responsible for the 5' incision. The protein is UvrABC system protein C of Lactobacillus acidophilus (strain ATCC 700396 / NCK56 / N2 / NCFM).